Reading from the N-terminus, the 140-residue chain is Putative nickel-responsive regulator (140 aa).

Residues histidine 81, histidine 92, histidine 94, and cysteine 100 each contribute to the Ni(2+) site.

It belongs to the transcriptional regulatory CopG/NikR family. Ni(2+) is required as a cofactor.

Transcriptional regulator. This is Putative nickel-responsive regulator from Methanocella arvoryzae (strain DSM 22066 / NBRC 105507 / MRE50).